The following is a 128-amino-acid chain: uncharacterized protein (128 aa).

This is an uncharacterized protein from Caenorhabditis elegans.